The chain runs to 405 residues: Polyadenylate-binding protein RBP45B (405 aa).

Residues 1 to 19 (MMQQPPPGGILPHHAPPPS) show a composition bias toward pro residues. A disordered region spans residues 1-54 (MMQQPPPGGILPHHAPPPSAQQQYGYQQPYGIAGAAPPPPQMWNPQAAAPPSVQ). Positions 20-35 (AQQQYGYQQPYGIAGA) are enriched in low complexity. RRM domains follow at residues 62-143 (RTLW…WASL), 155-234 (YTIF…PAAS), and 261-333 (TTVF…WGRS). Residues 379-405 (GGYQQTPQAGQQPPQQPPQQQQVGFSY) form a disordered region. Positions 380–405 (GYQQTPQAGQQPPQQPPQQQQVGFSY) are enriched in low complexity.

The protein belongs to the polyadenylate-binding RBP45 family. Both isoform 1 and isoform 2 interact with poly(A)+ RNA in nucleus. Expressed in roots, leaves, stems, flowers, siliques, and seedlings. Present in immature anther tissues (tapetum cells) and mature pollen grains.

The protein localises to the nucleus. Its function is as follows. Heterogeneous nuclear ribonucleoprotein (hnRNP)-protein binding the poly(A) tail of mRNA and probably involved in some steps of pre-mRNA maturation. This chain is Polyadenylate-binding protein RBP45B (RBP45B), found in Arabidopsis thaliana (Mouse-ear cress).